We begin with the raw amino-acid sequence, 110 residues long: Large ribosomal subunit protein uL22 (110 aa).

Belongs to the universal ribosomal protein uL22 family. Part of the 50S ribosomal subunit.

Functionally, this protein binds specifically to 23S rRNA; its binding is stimulated by other ribosomal proteins, e.g. L4, L17, and L20. It is important during the early stages of 50S assembly. It makes multiple contacts with different domains of the 23S rRNA in the assembled 50S subunit and ribosome. In terms of biological role, the globular domain of the protein is located near the polypeptide exit tunnel on the outside of the subunit, while an extended beta-hairpin is found that lines the wall of the exit tunnel in the center of the 70S ribosome. The sequence is that of Large ribosomal subunit protein uL22 from Klebsiella pneumoniae (strain 342).